Reading from the N-terminus, the 108-residue chain is Iron-sulfur cluster assembly protein CyaY (108 aa).

It belongs to the frataxin family.

Functionally, involved in iron-sulfur (Fe-S) cluster assembly. May act as a regulator of Fe-S biogenesis. The chain is Iron-sulfur cluster assembly protein CyaY from Burkholderia ambifaria (strain MC40-6).